Reading from the N-terminus, the 520-residue chain is DnaJ homolog l(2)tid, mitochondrial (520 aa).

A mitochondrion-targeting transit peptide spans 1-62 (MMISCKKLFV…RRLHTTRDLL (62 aa)). An Omega-N-methylarginine modification is found at Arg-30. A J domain is found at 65–130 (DYYATLGVAK…QKRREYDTYG (66 aa)). N6-acetyllysine is present on Lys-106. The segment at 214-292 (GVNKDVNVNV…CEGKGRTVQR (79 aa)) adopts a CR-type zinc-finger fold. The Zn(2+) site is built by Cys-227, Cys-230, Cys-244, Cys-247, Cys-266, Cys-269, Cys-280, and Cys-283. A CXXCXGXG motif; approximate repeat occupies 227–234 (CPKCAGTK). The CXXCXGXG motif repeat unit spans residues 244-251 (CQYCNGTG). A CXXCXGXG motif; approximate repeat occupies 266–273 (CRYCQGTR). The stretch at 280 to 287 (CSECEGKG) is one CXXCXGXG motif repeat. The disordered stretch occupies residues 430 to 520 (QIHGIANRKD…FISKIKSMFN (91 aa)). Over residues 446–476 (AGASEEPGAGAAAKASAAAAGSGASKPGPGA) the composition is skewed to low complexity. Over residues 479-495 (SEGKDQWTDNKKTKAKE) the composition is skewed to basic and acidic residues. Gly residues predominate over residues 496-511 (GGGSGSGQGDGGGGGF).

As to quaternary structure, interacts with ptc (via C-terminal cytoplasmic region); the interaction is probably direct. Interacts with hh/hedgehog; the interaction is probably mediated by the hedgehog receptor ptc. Appears to produce proteins of differing size. Predicted to have a molecular mass of 56 kDa (TID56) however proteins of 50 kDa, 47 kDa and 40 kDa have been identified and named TID50, TID47 and TID40. TID50 and TID40 localize to the mitochondria while TID47 localizes to the cytoplasm. TID50 is probably TID56 that has undergone mitochondrial transit peptide processing. TID40 and TID47 may be alternately processed proteins or may be isoforms resulting from alternative splicing. In terms of tissue distribution, ubiquitously expressed throughout embryonic development. In larvae, expression is seen in sensory organs, gopplet cells, gonads, imaginal disks, proventriculus, fat body, hematopoietic organ, midgut, Malpighian tubules and ring gland.

The protein localises to the cytoplasm. Its subcellular location is the cytosol. It is found in the mitochondrion. It localises to the mitochondrion outer membrane. Its function is as follows. Involved in hh/hedgehog signaling. May act as a tumor suppressor in larval imaginal disks. The chain is DnaJ homolog l(2)tid, mitochondrial from Drosophila melanogaster (Fruit fly).